A 502-amino-acid chain; its full sequence is Galactose/methyl galactoside import ATP-binding protein MglA (502 aa).

2 consecutive ABC transporter domains span residues 10–245 (LEMT…VGRE) and 255–502 (NEPK…SRYL). Position 42–49 (42–49 (GENGAGKS)) interacts with ATP.

This sequence belongs to the ABC transporter superfamily. Galactose/methyl galactoside importer (TC 3.A.1.2.3) family. The complex is composed of one ATP-binding protein (MglA), two transmembrane proteins (MglC) and a solute-binding protein (MglB).

It is found in the cell inner membrane. It catalyses the reaction D-galactose(out) + ATP + H2O = D-galactose(in) + ADP + phosphate + H(+). It carries out the reaction methyl beta-D-galactoside(out) + ATP + H2O = methyl beta-D-galactoside(in) + ADP + phosphate + H(+). Its function is as follows. Part of the ABC transporter complex MglABC involved in galactose/methyl galactoside import. Responsible for energy coupling to the transport system. This Vibrio cholerae serotype O1 (strain ATCC 39315 / El Tor Inaba N16961) protein is Galactose/methyl galactoside import ATP-binding protein MglA.